The following is a 309-amino-acid chain: Homoserine O-succinyltransferase (309 aa).

C142 functions as the Acyl-thioester intermediate in the catalytic mechanism. Residues K163 and S192 each contribute to the substrate site. The Proton acceptor role is filled by H235. E237 is a catalytic residue. R249 serves as a coordination point for substrate.

Belongs to the MetA family. As to quaternary structure, homodimer.

Its subcellular location is the cytoplasm. It carries out the reaction L-homoserine + succinyl-CoA = O-succinyl-L-homoserine + CoA. It participates in amino-acid biosynthesis; L-methionine biosynthesis via de novo pathway; O-succinyl-L-homoserine from L-homoserine: step 1/1. Transfers a succinyl group from succinyl-CoA to L-homoserine, forming succinyl-L-homoserine. In Salmonella gallinarum (strain 287/91 / NCTC 13346), this protein is Homoserine O-succinyltransferase.